We begin with the raw amino-acid sequence, 507 residues long: Glycerol kinase 2 (507 aa).

Position 16 (T16) interacts with ADP. Residues T16, T17, and S18 each coordinate ATP. Residue T16 coordinates sn-glycerol 3-phosphate. R20 contributes to the ADP binding site. Sn-glycerol 3-phosphate-binding residues include R86, E87, Y138, and D248. Glycerol contacts are provided by R86, E87, Y138, D248, and Q249. Positions 270 and 314 each coordinate ADP. ATP is bound by residues T270, G314, Q318, and G415. ADP contacts are provided by G415 and N419.

This sequence belongs to the FGGY kinase family.

The enzyme catalyses glycerol + ATP = sn-glycerol 3-phosphate + ADP + H(+). The protein operates within polyol metabolism; glycerol degradation via glycerol kinase pathway; sn-glycerol 3-phosphate from glycerol: step 1/1. Inhibited by fructose 1,6-bisphosphate (FBP). In terms of biological role, key enzyme in the regulation of glycerol uptake and metabolism. Catalyzes the phosphorylation of glycerol to yield sn-glycerol 3-phosphate. This Streptomyces avermitilis (strain ATCC 31267 / DSM 46492 / JCM 5070 / NBRC 14893 / NCIMB 12804 / NRRL 8165 / MA-4680) protein is Glycerol kinase 2.